The primary structure comprises 188 residues: Ubiquitin-conjugating enzyme E2-21 kDa (188 aa).

The 180-residue stretch at 3–182 (STEKRLLKEY…VHYYIAKYSA (180 aa)) folds into the UBC core domain. The Glycyl thioester intermediate role is filled by cysteine 119.

It belongs to the ubiquitin-conjugating enzyme family.

It carries out the reaction S-ubiquitinyl-[E1 ubiquitin-activating enzyme]-L-cysteine + [E2 ubiquitin-conjugating enzyme]-L-cysteine = [E1 ubiquitin-activating enzyme]-L-cysteine + S-ubiquitinyl-[E2 ubiquitin-conjugating enzyme]-L-cysteine.. The protein operates within protein modification; protein ubiquitination. Catalyzes the covalent attachment of ubiquitin to other proteins. Essential for peroxisome biogenesis. Required for UBC4-independent ubiquitination of PEX5. The sequence is that of Ubiquitin-conjugating enzyme E2-21 kDa (PEX4) from Pichia angusta (Yeast).